The primary structure comprises 156 residues: Regulatory protein RecX (156 aa).

The protein belongs to the RecX family.

The protein resides in the cytoplasm. Functionally, modulates RecA activity. This is Regulatory protein RecX from Pseudomonas putida (strain ATCC 700007 / DSM 6899 / JCM 31910 / BCRC 17059 / LMG 24140 / F1).